The following is a 346-amino-acid chain: MSENKTSLSYKDAGVDIDAGNQLVERIKSVTKKTHRPEVKGNLGGFGALCELPTKYKKPLLVSGTDGVGTKLRVAMDANRHDGVGIDLVAMCVNDLIVQGAEPLFFLDYYATGKLDVDVAASVVTGIGAGCEQAGCALIGGETAEMPGMYHDGDYDIAGFCVGVVEADNVIDGTNVKPGQKLIALGSSGPHSNGYSLVRKIIEVSGADVNAELNGKPIIDQLLEPTRIYVKSVLALLEEVQVSAISHITGGGFWENIPRVLPEDAKVVIDEKSWEWPAVFSWLQENGNVTRHEMYRTFNCGVGLVIVVDDADTEQAVNILKQHGENAWVIGDIASKDGEEQVEINA.

The protein belongs to the AIR synthase family.

The protein localises to the cytoplasm. It carries out the reaction 2-formamido-N(1)-(5-O-phospho-beta-D-ribosyl)acetamidine + ATP = 5-amino-1-(5-phospho-beta-D-ribosyl)imidazole + ADP + phosphate + H(+). It functions in the pathway purine metabolism; IMP biosynthesis via de novo pathway; 5-amino-1-(5-phospho-D-ribosyl)imidazole from N(2)-formyl-N(1)-(5-phospho-D-ribosyl)glycinamide: step 2/2. The polypeptide is Phosphoribosylformylglycinamidine cyclo-ligase (Alteromonas mediterranea (strain DSM 17117 / CIP 110805 / LMG 28347 / Deep ecotype)).